The chain runs to 339 residues: NmrA-like family domain-containing oxidoreductase cpsB (339 aa).

Lysine 142 serves as a coordination point for NADP(+).

It belongs to the NmrA-type oxidoreductase family.

The catalysed reaction is didehydrocampesine A + 2 AH2 = campesine A + 2 A. It participates in alkaloid biosynthesis. Its function is as follows. Oxidoreductase; part of the gene cluster that mediates the biosynthesis of campesine G, a dimeric indole piperazine alkaloid that shows good insecticidal activity Galleria mellonella. Within the pathway, cpsB reduces the unstable (S,S)-trypyl-valyl dihydropiperazine (didehydrocampesine A) intermediate to (S, S)-trypyl-valyl-piperazine (campesine A) using two equivalents of NAD(P)H. The non-canonical non-ribosomal peptide synthetase cpsA catalyzes the first steps of the pathway by producing L-tryptophanal and L-valinal from their respective amino-acids. These products condensate spontaneously to form trypyl-valyl pyrazine also known as didehydrocampesine A. The NmrA-like family domain-containing oxidoreductase cpsB is the next enzyme in cps pathway and reduces the unstable didehydrocampesine A to campesine A. The methyltransferase cpsF and the acetyltransferase cpsE both recognize N13 of piperazine ring to carry out methylation and acetylation of campesine A to produce campesine C and B, respectively. The cytochrome P450 monooxygenase cpsD then acts as a dimerase that catalyzes oxidative heterocoupling between campesine B and C to produce heterodimers with unexpected 6/5/6/6/6/6/5/6 eight-ring scaffold called campesine D. Finally,the cytochrome P450 monooxygenase cpsC is a regioselective dehydrogenase that catalyzes dehydrogenation reaction towards C2-N1 to produce campesine G. The chain is NmrA-like family domain-containing oxidoreductase cpsB from Aspergillus campestris (strain IBT 28561).